The primary structure comprises 381 residues: L-lactate dehydrogenase (381 aa).

The region spanning 1–380 is the FMN hydroxy acid dehydrogenase domain; it reads MIISSASDYR…KPEALVDLSK (380 aa). Tyrosine 24 provides a ligand contact to substrate. The FMN site is built by serine 106 and glutamine 127. A substrate-binding site is contributed by tyrosine 129. Threonine 155 serves as a coordination point for FMN. Arginine 164 lines the substrate pocket. FMN is bound at residue lysine 251. Histidine 275 serves as the catalytic Proton acceptor. Arginine 278 is a binding site for substrate. Residue 306–330 participates in FMN binding; the sequence is DSGIRNGLDIVRMLALGADATMLGR.

This sequence belongs to the FMN-dependent alpha-hydroxy acid dehydrogenase family. FMN is required as a cofactor.

The protein resides in the cell inner membrane. The enzyme catalyses (S)-lactate + A = pyruvate + AH2. Functionally, catalyzes the conversion of L-lactate to pyruvate. Is coupled to the respiratory chain. In Haemophilus influenzae (strain 86-028NP), this protein is L-lactate dehydrogenase.